Consider the following 347-residue polypeptide: Mediator of RNA polymerase II transcription subunit 7 (347 aa).

Disordered stretches follow at residues 97–172 (GIER…TQTH) and 302–326 (VPVG…GAEE). 2 stretches are compositionally biased toward low complexity: residues 108-171 (STTT…STQT) and 302-312 (VPVGARTGTTV).

This sequence belongs to the Mediator complex subunit 7 family. As to quaternary structure, component of the Mediator complex.

It is found in the nucleus. In terms of biological role, component of the Mediator complex, a coactivator involved in the regulated transcription of nearly all RNA polymerase II-dependent genes. Mediator functions as a bridge to convey information from gene-specific regulatory proteins to the basal RNA polymerase II transcription machinery. Mediator is recruited to promoters by direct interactions with regulatory proteins and serves as a scaffold for the assembly of a functional preinitiation complex with RNA polymerase II and the general transcription factors. The polypeptide is Mediator of RNA polymerase II transcription subunit 7 (med-7) (Neurospora crassa (strain ATCC 24698 / 74-OR23-1A / CBS 708.71 / DSM 1257 / FGSC 987)).